The chain runs to 608 residues: UvrABC system protein C (608 aa).

A GIY-YIG domain is found at 22–100 (EKPGIYQYLN…IKKYKPRYNV (79 aa)). The UVR domain maps to 214–249 (QEISRLLYQRMQDLAAEMKFEEAQKVKEKYALIENY).

Belongs to the UvrC family. As to quaternary structure, interacts with UvrB in an incision complex.

The protein localises to the cytoplasm. In terms of biological role, the UvrABC repair system catalyzes the recognition and processing of DNA lesions. UvrC both incises the 5' and 3' sides of the lesion. The N-terminal half is responsible for the 3' incision and the C-terminal half is responsible for the 5' incision. In Bacteroides fragilis (strain ATCC 25285 / DSM 2151 / CCUG 4856 / JCM 11019 / LMG 10263 / NCTC 9343 / Onslow / VPI 2553 / EN-2), this protein is UvrABC system protein C.